The sequence spans 473 residues: Photosystem II CP43 reaction center protein (473 aa).

Residues 1–14 (MKTLYSLRRFYHVE) constitute a propeptide that is removed on maturation. N-acetylthreonine is present on threonine 15. Threonine 15 is modified (phosphothreonine). The next 5 membrane-spanning stretches (helical) occupy residues 69-93 (LFEV…PHLA), 134-155 (LLGP…KDRN), 178-200 (KALY…RKIT), 255-275 (KPFA…LSYS), and 291-312 (WFNN…ASQA). Glutamate 367 is a [CaMn4O5] cluster binding site. Residues 447–471 (RARAAAAGFEKGIDRDFEPVLSMTP) traverse the membrane as a helical segment.

The protein belongs to the PsbB/PsbC family. PsbC subfamily. As to quaternary structure, PSII is composed of 1 copy each of membrane proteins PsbA, PsbB, PsbC, PsbD, PsbE, PsbF, PsbH, PsbI, PsbJ, PsbK, PsbL, PsbM, PsbT, PsbX, PsbY, PsbZ, Psb30/Ycf12, at least 3 peripheral proteins of the oxygen-evolving complex and a large number of cofactors. It forms dimeric complexes. The cofactor is Binds multiple chlorophylls and provides some of the ligands for the Ca-4Mn-5O cluster of the oxygen-evolving complex. It may also provide a ligand for a Cl- that is required for oxygen evolution. PSII binds additional chlorophylls, carotenoids and specific lipids..

Its subcellular location is the plastid. It localises to the chloroplast thylakoid membrane. Its function is as follows. One of the components of the core complex of photosystem II (PSII). It binds chlorophyll and helps catalyze the primary light-induced photochemical processes of PSII. PSII is a light-driven water:plastoquinone oxidoreductase, using light energy to abstract electrons from H(2)O, generating O(2) and a proton gradient subsequently used for ATP formation. This Aethionema cordifolium (Lebanon stonecress) protein is Photosystem II CP43 reaction center protein.